A 435-amino-acid polypeptide reads, in one-letter code: Trigger factor (435 aa).

Residues 125-147 (MEVPEQDTSVSDADVDSELENKR) are disordered. In terms of domain architecture, PPIase FKBP-type spans 164 to 249 (GDTVVIDYEG…IHEVKEKQLP (86 aa)).

The protein belongs to the FKBP-type PPIase family. Tig subfamily.

The protein localises to the cytoplasm. It carries out the reaction [protein]-peptidylproline (omega=180) = [protein]-peptidylproline (omega=0). Functionally, involved in protein export. Acts as a chaperone by maintaining the newly synthesized protein in an open conformation. Functions as a peptidyl-prolyl cis-trans isomerase. The polypeptide is Trigger factor (Limosilactobacillus fermentum (strain NBRC 3956 / LMG 18251) (Lactobacillus fermentum)).